The chain runs to 234 residues: Large ribosomal subunit protein uL1 (234 aa).

Belongs to the universal ribosomal protein uL1 family. Part of the 50S ribosomal subunit.

Its function is as follows. Binds directly to 23S rRNA. The L1 stalk is quite mobile in the ribosome, and is involved in E site tRNA release. Functionally, protein L1 is also a translational repressor protein, it controls the translation of the L11 operon by binding to its mRNA. The chain is Large ribosomal subunit protein uL1 from Bartonella tribocorum (strain CIP 105476 / IBS 506).